We begin with the raw amino-acid sequence, 182 residues long: SAGA-associated factor 11 homolog (182 aa).

A disordered region spans residues 61–84 (GSGAAVEGEPEDSKPYTIVDQPDT). An SGF11-type zinc finger spans residues 98–119 (CHCPNCNRIVAASRFAPHLEKC). The disordered stretch occupies residues 133–182 (RIANTRDVGTGNYFGGDEDDEDDADWSGEKRKKKISQVRTNGSKKNGKTS). The span at 148-158 (GDEDDEDDADW) shows a compositional bias: acidic residues.

The protein belongs to the SGF11 family. Component of some SAGA transcription coactivator-HAT complexes. Within the SAGA complex, participates in a subcomplex of SAGA called the DUB module (deubiquitination module).

Its subcellular location is the nucleus. In terms of biological role, component of the transcription regulatory histone acetylation (HAT) complex SAGA, a multiprotein complex that activates transcription by remodeling chromatin and mediating histone acetylation and deubiquitination. Within the SAGA complex, participates in a subcomplex that specifically deubiquitinates histone H2B. The SAGA complex is recruited to specific gene promoters by activators, where it is required for transcription. In Anopheles gambiae (African malaria mosquito), this protein is SAGA-associated factor 11 homolog.